Here is a 416-residue protein sequence, read N- to C-terminus: Putative competence-damage inducible protein (416 aa).

The protein belongs to the CinA family.

The polypeptide is Putative competence-damage inducible protein (Bacillus pumilus (strain SAFR-032)).